We begin with the raw amino-acid sequence, 344 residues long: Glycerol-3-phosphate dehydrogenase [NAD(P)+] (344 aa).

Positions 18, 38, and 115 each coordinate NADPH. Residues Lys115, Gly144, and Thr146 each contribute to the sn-glycerol 3-phosphate site. Ala148 lines the NADPH pocket. Sn-glycerol 3-phosphate-binding residues include Lys199, Asp252, Ser262, Arg263, and Asn264. Residue Lys199 is the Proton acceptor of the active site. Arg263 serves as a coordination point for NADPH. NADPH contacts are provided by Val288 and Glu290.

This sequence belongs to the NAD-dependent glycerol-3-phosphate dehydrogenase family.

It localises to the cytoplasm. The enzyme catalyses sn-glycerol 3-phosphate + NAD(+) = dihydroxyacetone phosphate + NADH + H(+). It catalyses the reaction sn-glycerol 3-phosphate + NADP(+) = dihydroxyacetone phosphate + NADPH + H(+). Its pathway is membrane lipid metabolism; glycerophospholipid metabolism. In terms of biological role, catalyzes the reduction of the glycolytic intermediate dihydroxyacetone phosphate (DHAP) to sn-glycerol 3-phosphate (G3P), the key precursor for phospholipid synthesis. The protein is Glycerol-3-phosphate dehydrogenase [NAD(P)+] of Hydrogenovibrio crunogenus (strain DSM 25203 / XCL-2) (Thiomicrospira crunogena).